We begin with the raw amino-acid sequence, 326 residues long: Protein FAM50 homolog (326 aa).

The interval 76-112 is disordered; it reads EISNRDLQVARGASSSTSLAKDSQEAREKEEHVAKHT. Positions 97–109 are enriched in basic and acidic residues; that stretch reads DSQEAREKEEHVA.

It belongs to the FAM50 family.

The protein is Protein FAM50 homolog of Caenorhabditis briggsae.